The sequence spans 199 residues: Protein extra-macrochaetae (199 aa).

One can recognise a bHLH domain in the interval 23–75; the sequence is RIQRHPTHRGDGENAEMKMYLSKLKDLVPFMPKNRKLTKLEIIQHVIDYICDL. The residue at position 106 (Ser106) is a Phosphoserine. A disordered region spans residues 127–199; sequence RLNAEQPAKV…QNAEKDSRQS (73 aa). The span at 161 to 182 shows a compositional bias: low complexity; it reads QQHQQQQQLQLQQQQLQSQQQL.

Heterodimer with other HLH proteins.

Its subcellular location is the nucleus. Participates in sensory organ patterning by antagonizing the neurogenic activity of the Achaete-scute complex (AS-C). It lacks a basic DNA-binding domain but is able to form heterodimers with other HLH proteins, thereby inhibiting DNA binding. May sequester proneural proteins in complexes inefficient for DNA interaction. EMC also affects vein differentiation. Inhibits the activity of AS-C proteins by forming an non-DNA binding heterodimer. The protein is Protein extra-macrochaetae (emc) of Drosophila melanogaster (Fruit fly).